The chain runs to 409 residues: Peptidase T (409 aa).

Residue His-78 coordinates Zn(2+). The active site involves Asp-80. Asp-140 contacts Zn(2+). Glu-173 acts as the Proton acceptor in catalysis. Residues Glu-174, Asp-196, and His-379 each contribute to the Zn(2+) site.

Belongs to the peptidase M20B family. Requires Zn(2+) as cofactor.

The protein resides in the cytoplasm. It catalyses the reaction Release of the N-terminal residue from a tripeptide.. Its function is as follows. Cleaves the N-terminal amino acid of tripeptides. The sequence is that of Peptidase T from Salmonella enteritidis PT4 (strain P125109).